Consider the following 570-residue polypeptide: MSLLIDSVPTVAYKDQKPGTSGLRKKTKVFMDEPHYTENFIQATMQSIPNGSEGTTLVVGGDGRFYNDVIMNKIAAVGAANGVRKLVIGQGGLLSTPAASHIIRTYEEKCTGGGIILTASHNPGGPENDLGIKYNLPNGGPAPESVTNAIWEASKKLTHYKIIKNFPKLNLNKLGKNQKYGPLLVDIIDPAKAYVQFLKEIFDFDLIKSFLAKQRKDKGWKLLFDSLNGITGPYGKAIFVDEFGLPAEEVLQNWHPLPDFGGLHPDPNLTYARTLVDRVDREKIAFGAASDGDGDRNMIYGYGPAFVSPGDSVAIIAEYAPEIPYFAKQGIYGLARSFPTSSAIDRVAAKKGLRCYEVPTGWKFFCALFDAKKLSICGEESFGTGSNHIREKDGLWAIIAWLNILAIYHRRNPEKEASIKTIQDEFWNEYGRTFFTRYDYEHIECEQAEKVVALLSEFVSRPNVCGSHFPADESLTVIDCGDFSYRDLDGSISENQGLFVKFSNGTKFVLRLSGTGSSGATIRLYVEKYTDKKENYGQTADVFLKPVINSIVKFLRFKEILGTDEPTVRT.

Serine 2 bears the N-acetylserine mark. Alpha-D-glucose 1,6-bisphosphate is bound by residues arginine 24 and serine 120. Serine 120 serves as the catalytic Phosphoserine intermediate. Mg(2+) is bound by residues serine 120, aspartate 291, aspartate 293, and aspartate 295. Serine 120 is subject to Phosphoserine. The alpha-D-glucose 1,6-bisphosphate site is built by aspartate 295, arginine 296, threonine 360, glutamate 379, serine 381, and lysine 392.

It belongs to the phosphohexose mutase family. In terms of assembly, monomer. Mg(2+) serves as cofactor.

It is found in the cytoplasm. The catalysed reaction is alpha-D-glucose 1-phosphate = alpha-D-glucose 6-phosphate. It carries out the reaction O-phospho-L-seryl-[protein] + alpha-D-glucose 1-phosphate = alpha-D-glucose 1,6-bisphosphate + L-seryl-[protein]. The enzyme catalyses alpha-D-glucose 1,6-bisphosphate + L-seryl-[protein] = O-phospho-L-seryl-[protein] + alpha-D-glucose 6-phosphate. In terms of biological role, minor phosphoglucomutase isozyme that catalyzes the reversible interconversion of alpha-D-glucose 1-phosphate and alpha-D-glucose 6-phosphate. The mechanism proceeds via the intermediate compound alpha-D-glucose 1,6-bisphosphate. Constitutes about 10-20% of the phosphoglucomutase activity in the cell. Key enzyme in hexose metabolism. The forward reaction is an essential step in the energy metabolism of galactose since the product of the galactose pathway enzymes in yeast is glucose 1-phosphate. The reverse reaction is an essential step for biosynthesis when carbon sources other than galactose are the energy source because glucose 1-phosphate is the starting point for the synthesis of UDP-glucose, which acts as a precursor for the synthesis of oligosaccharides and trehalose. This is Phosphoglucomutase 1 from Saccharomyces cerevisiae (strain ATCC 204508 / S288c) (Baker's yeast).